A 367-amino-acid polypeptide reads, in one-letter code: Germination protease (367 aa).

The propeptide occupies 1 to 15 (MKEPLDLSKYSIRTD).

The protein belongs to the peptidase A25 family. In terms of assembly, homotetramer. Autoproteolytically processed. The inactive tetrameric zymogen termed p46 autoprocesses to a smaller form termed p41, which is active only during spore germination.

It catalyses the reaction Endopeptidase action with P4 Glu or Asp, P1 preferably Glu &gt; Asp, P1' hydrophobic and P2' Ala.. Functionally, initiates the rapid degradation of small, acid-soluble proteins during spore germination. The protein is Germination protease of Bacillus cereus (strain ATCC 14579 / DSM 31 / CCUG 7414 / JCM 2152 / NBRC 15305 / NCIMB 9373 / NCTC 2599 / NRRL B-3711).